Reading from the N-terminus, the 378-residue chain is Signal recognition particle receptor FtsY (378 aa).

Residues 184–191 (GVNGTGKT), 266–270 (DTAGR), and 330–333 (TKLD) contribute to the GTP site.

Belongs to the GTP-binding SRP family. FtsY subfamily. In terms of assembly, part of the signal recognition particle protein translocation system, which is composed of SRP and FtsY. SRP is a ribonucleoprotein composed of Ffh and a 4.5S RNA molecule.

It localises to the cell membrane. The protein resides in the cytoplasm. The enzyme catalyses GTP + H2O = GDP + phosphate + H(+). Involved in targeting and insertion of nascent membrane proteins into the cytoplasmic membrane. Acts as a receptor for the complex formed by the signal recognition particle (SRP) and the ribosome-nascent chain (RNC). Interaction with SRP-RNC leads to the transfer of the RNC complex to the Sec translocase for insertion into the membrane, the hydrolysis of GTP by both Ffh and FtsY, and the dissociation of the SRP-FtsY complex into the individual components. The polypeptide is Signal recognition particle receptor FtsY (Buchnera aphidicola subsp. Acyrthosiphon pisum (strain APS) (Acyrthosiphon pisum symbiotic bacterium)).